Consider the following 71-residue polypeptide: Small integral membrane protein 31 (71 aa).

A helical transmembrane segment spans residues 8 to 28 (LEVAFILLAFFIFSLFTLASI). The segment covering 48–57 (RKRKEFKGKK) has biased composition (basic residues). Positions 48 to 71 (RKRKEFKGKKNCSDEEHKIETMQP) are disordered. An N-linked (GlcNAc...) asparagine glycan is attached at N58. A compositionally biased stretch (basic and acidic residues) spans 58–71 (NCSDEEHKIETMQP).

It is found in the membrane. This Mus musculus (Mouse) protein is Small integral membrane protein 31.